Here is a 271-residue protein sequence, read N- to C-terminus: Chymotrypsin-like elastase family member 2A (271 aa).

Residues 1–16 form the signal peptide; sequence MIRTLLLSALVAGALS. The propeptide at 17 to 30 is activation peptide; it reads CGYPTYEVEDDVSR. In terms of domain architecture, Peptidase S1 spans 31-269; the sequence is VVGGQEATPN…YIDWINSVMA (239 aa). Cys60 and Cys76 are disulfide-bonded. Active-site charge relay system residues include His75 and Asp123. Cystine bridges form between Cys157–Cys224, Cys188–Cys204, and Cys214–Cys245. Residue Ser218 is the Charge relay system of the active site.

This sequence belongs to the peptidase S1 family. Elastase subfamily. In terms of assembly, interacts with CPA1. Interacts with SERPINA1. Highly expressed in pancreas (at mRNA and protein levels). Also expressed in adrenal gland and small intestine.

It localises to the secreted. It catalyses the reaction Preferential cleavage: Leu-|-Xaa, Met-|-Xaa and Phe-|-Xaa. Hydrolyzes elastin.. Elastase that enhances insulin signaling and might have a physiologic role in cellular glucose metabolism. Circulates in plasma and reduces platelet hyperactivation, triggers both insulin secretion and degradation, and increases insulin sensitivity. The sequence is that of Chymotrypsin-like elastase family member 2A from Mus musculus (Mouse).